The primary structure comprises 89 residues: MPAPRYKSGSSKKVYRKAPGNSSIVHYRRKKQSKAVCGACGALLNGVPRGRAVEITKLAKTQKRPERAFGGNLCPKCVKKMMVIKARNF.

A disordered region spans residues 1-22 (MPAPRYKSGSSKKVYRKAPGNS).

It belongs to the eukaryotic ribosomal protein eL34 family.

In Methanococcus maripaludis (strain C7 / ATCC BAA-1331), this protein is Large ribosomal subunit protein eL34.